The following is an 837-amino-acid chain: Translation initiation factor IF-2 (837 aa).

The interval 94–252 is disordered; that stretch reads QRSPEEIEAE…NAHGFQSPTG (159 aa). The span at 96 to 136 shows a compositional bias: basic and acidic residues; the sequence is SPEEIEAERKRELDERRAVENAARQKAEEEARVRAEEEARR. Over residues 137–171 the composition is skewed to low complexity; sequence QPAAPSAPAEAVAAPAPVAEPVREAAPVVAAAPAA. Composition is skewed to basic and acidic residues over residues 172-213 and 221-230; these read DTRK…EKAP and TTDEESDGFR. Over residues 231 to 244 the composition is skewed to basic residues; it reads RGGRGKAKLKKRNA. A tr-type G domain is found at 337 to 506; the sequence is PRAPVVTVMG…LLQAEVLELT (170 aa). The tract at residues 346-353 is G1; the sequence is GHVDHGKT. GTP is bound at residue 346 to 353; it reads GHVDHGKT. Residues 371-375 form a G2 region; that stretch reads GITQH. Positions 392–395 are G3; sequence DTPG. GTP is bound by residues 392–396 and 446–449; these read DTPGH and NKID. Residues 446–449 are G4; sequence NKID. Positions 482–484 are G5; sequence SAK.

Belongs to the TRAFAC class translation factor GTPase superfamily. Classic translation factor GTPase family. IF-2 subfamily.

It localises to the cytoplasm. Functionally, one of the essential components for the initiation of protein synthesis. Protects formylmethionyl-tRNA from spontaneous hydrolysis and promotes its binding to the 30S ribosomal subunits. Also involved in the hydrolysis of GTP during the formation of the 70S ribosomal complex. This is Translation initiation factor IF-2 from Pseudomonas fluorescens (strain Pf0-1).